The primary structure comprises 700 residues: Elongation factor G (700 aa).

Positions 10–286 (SKVRNIGIMA…AVIDYLPSPL (277 aa)) constitute a tr-type G domain. GTP contacts are provided by residues 19-26 (AHIDAGKT), 83-87 (DTPGH), and 137-140 (NKMD).

The protein belongs to the TRAFAC class translation factor GTPase superfamily. Classic translation factor GTPase family. EF-G/EF-2 subfamily.

The protein resides in the cytoplasm. Catalyzes the GTP-dependent ribosomal translocation step during translation elongation. During this step, the ribosome changes from the pre-translocational (PRE) to the post-translocational (POST) state as the newly formed A-site-bound peptidyl-tRNA and P-site-bound deacylated tRNA move to the P and E sites, respectively. Catalyzes the coordinated movement of the two tRNA molecules, the mRNA and conformational changes in the ribosome. The protein is Elongation factor G of Mycolicibacterium gilvum (strain PYR-GCK) (Mycobacterium gilvum (strain PYR-GCK)).